We begin with the raw amino-acid sequence, 267 residues long: 3-methyl-2-oxobutanoate hydroxymethyltransferase (267 aa).

Residues Asp46 and Asp85 each contribute to the Mg(2+) site. Residues 46–47 (DS), Asp85, and Lys115 contribute to the 3-methyl-2-oxobutanoate site. Glu117 provides a ligand contact to Mg(2+). Residue Glu184 is the Proton acceptor of the active site.

Belongs to the PanB family. In terms of assembly, homodecamer; pentamer of dimers. Mg(2+) serves as cofactor.

The protein resides in the cytoplasm. The enzyme catalyses 3-methyl-2-oxobutanoate + (6R)-5,10-methylene-5,6,7,8-tetrahydrofolate + H2O = 2-dehydropantoate + (6S)-5,6,7,8-tetrahydrofolate. Its pathway is cofactor biosynthesis; (R)-pantothenate biosynthesis; (R)-pantoate from 3-methyl-2-oxobutanoate: step 1/2. Functionally, catalyzes the reversible reaction in which hydroxymethyl group from 5,10-methylenetetrahydrofolate is transferred onto alpha-ketoisovalerate to form ketopantoate. The polypeptide is 3-methyl-2-oxobutanoate hydroxymethyltransferase (Geotalea uraniireducens (strain Rf4) (Geobacter uraniireducens)).